Here is a 201-residue protein sequence, read N- to C-terminus: MPIGVPKVPFRLPGEPSAQWVDLYNRLYRERVLFLCQELDDELANQLIGIMLYLNAEEQNKGLYIYINSPGGSVTCGIAVYDAMNYIKSEVTTICVGTAASMASFILAGGDRGKRIALPHSRIMVHQPEGGSQGQASEVLSESQEVMRIRRQVGRIYSERTGQTLSRVSRDMDRDQFLSAREAKEYGLVDQVAVDTKWSTN.

The Nucleophile role is filled by Ser101. The active site involves His126.

It belongs to the peptidase S14 family. In terms of assembly, component of the chloroplastic Clp protease core complex.

It localises to the plastid. Its subcellular location is the chloroplast stroma. The catalysed reaction is Hydrolysis of proteins to small peptides in the presence of ATP and magnesium. alpha-casein is the usual test substrate. In the absence of ATP, only oligopeptides shorter than five residues are hydrolyzed (such as succinyl-Leu-Tyr-|-NHMec, and Leu-Tyr-Leu-|-Tyr-Trp, in which cleavage of the -Tyr-|-Leu- and -Tyr-|-Trp bonds also occurs).. Functionally, cleaves peptides in various proteins in a process that requires ATP hydrolysis. Has a chymotrypsin-like activity. Plays a major role in the degradation of misfolded proteins. This chain is ATP-dependent Clp protease proteolytic subunit, found in Chlorella vulgaris (Green alga).